Reading from the N-terminus, the 209-residue chain is Large ribosomal subunit protein uL4 (209 aa).

A disordered region spans residues 45 to 77; it reads RQGTHKAKERAEVTGSTRKIKKQKGTGTARAGS.

Belongs to the universal ribosomal protein uL4 family. Part of the 50S ribosomal subunit.

In terms of biological role, one of the primary rRNA binding proteins, this protein initially binds near the 5'-end of the 23S rRNA. It is important during the early stages of 50S assembly. It makes multiple contacts with different domains of the 23S rRNA in the assembled 50S subunit and ribosome. Forms part of the polypeptide exit tunnel. In Flavobacterium johnsoniae (strain ATCC 17061 / DSM 2064 / JCM 8514 / BCRC 14874 / CCUG 350202 / NBRC 14942 / NCIMB 11054 / UW101) (Cytophaga johnsonae), this protein is Large ribosomal subunit protein uL4.